A 48-amino-acid chain; its full sequence is Large ribosomal subunit protein eL40 (48 aa).

Belongs to the eukaryotic ribosomal protein eL40 family.

This Methanosphaerula palustris (strain ATCC BAA-1556 / DSM 19958 / E1-9c) protein is Large ribosomal subunit protein eL40.